An 84-amino-acid chain; its full sequence is UPF0291 protein SMU_447 (84 aa).

The segment at 57–84 (EGNDITPAKLKEIQRQKGIHGRKPEDNS) is disordered.

The protein belongs to the UPF0291 family.

Its subcellular location is the cytoplasm. The polypeptide is UPF0291 protein SMU_447 (Streptococcus mutans serotype c (strain ATCC 700610 / UA159)).